Here is a 177-residue protein sequence, read N- to C-terminus: Large ribosomal subunit protein uL6 (177 aa).

It belongs to the universal ribosomal protein uL6 family. As to quaternary structure, part of the 50S ribosomal subunit.

Its function is as follows. This protein binds to the 23S rRNA, and is important in its secondary structure. It is located near the subunit interface in the base of the L7/L12 stalk, and near the tRNA binding site of the peptidyltransferase center. The sequence is that of Large ribosomal subunit protein uL6 from Haemophilus influenzae (strain 86-028NP).